We begin with the raw amino-acid sequence, 340 residues long: DNA-directed RNA polymerase subunit alpha (340 aa).

Residues 1 to 226 (MLIAQRPSLT…ELFGLARELN (226 aa)) are alpha N-terminal domain (alpha-NTD). Positions 243–340 (LAADLALPIE…DAGFVETEQY (98 aa)) are alpha C-terminal domain (alpha-CTD).

This sequence belongs to the RNA polymerase alpha chain family. In terms of assembly, homodimer. The RNAP catalytic core consists of 2 alpha, 1 beta, 1 beta' and 1 omega subunit. When a sigma factor is associated with the core the holoenzyme is formed, which can initiate transcription.

The catalysed reaction is RNA(n) + a ribonucleoside 5'-triphosphate = RNA(n+1) + diphosphate. Functionally, DNA-dependent RNA polymerase catalyzes the transcription of DNA into RNA using the four ribonucleoside triphosphates as substrates. The polypeptide is DNA-directed RNA polymerase subunit alpha (Streptomyces avermitilis (strain ATCC 31267 / DSM 46492 / JCM 5070 / NBRC 14893 / NCIMB 12804 / NRRL 8165 / MA-4680)).